Here is a 264-residue protein sequence, read N- to C-terminus: MKAVVLTVAVLFLTGSQARHFWQQDDPQSPWDRVKDFATLYVDAVKDTGRDYVSQFESSALGKQLNLKLLDNWDTLGSSISKLREQLGPVTQEFWDNLEKDTEWLRQEMNKDLEEVKQKVQPYLEEFQKKWQEEVERYRQKVEPLSTELREGARQKLQELQEKLTPLGEELRDHARTHVDVLRTQLAPYSDKMRERLAERLTALKDSASFAEYHAKASEHLKTLREKAKPAIEDLGQGLLPVLENLKASFLSAIDDAAKKLSSQ.

A signal peptide spans 1–18 (MKAVVLTVAVLFLTGSQA). 2 repeat units span residues 67–88 (LKLL…EQLG) and 89–110 (PVTQ…QEMN). The interval 67–264 (LKLLDNWDTL…DDAAKKLSSQ (198 aa)) is 10 X approximate tandem repeats. Methionine sulfoxide is present on Met109. A 3; half-length repeat occupies 111-121 (KDLEEVKQKVQ). Tandem repeats lie at residues 122-143 (PYLE…QKVE), 144-165 (PLST…EKLT), and 166-187 (PLGE…TQLA). A 7; truncated repeat occupies 188–207 (PYSDKMRERLAERLTALKDS). At Met193 the chain carries Methionine sulfoxide. The stretch at 208–229 (ASFAEYHAKASEHLKTLREKAK) is repeat 8. The stretch at 230–240 (PAIEDLGQGLL) is one 9; half-length repeat. Repeat unit 10 spans residues 241–264 (PVLENLKASFLSAIDDAAKKLSSQ).

The protein belongs to the apolipoprotein A1/A4/E family. In terms of assembly, homodimer. Interacts with APOA1BP and CLU. Component of a sperm activating protein complex (SPAP), consisting of APOA1, an immunoglobulin heavy chain, an immunoglobulin light chain and albumin. Interacts with NDRG1. Interacts with SCGB3A2. Interacts with NAXE and YJEFN3. Glycosylated. Post-translationally, palmitoylated. In terms of processing, phosphorylation sites are present in the extracellular medium.

The protein localises to the secreted. Participates in the reverse transport of cholesterol from tissues to the liver for excretion by promoting cholesterol efflux from tissues and by acting as a cofactor for the lecithin cholesterol acyltransferase (LCAT). As part of the SPAP complex, activates spermatozoa motility. In Castor canadensis (American beaver), this protein is Apolipoprotein A-I (APOA1).